The following is a 197-amino-acid chain: Prefoldin subunit 3 (197 aa).

The segment at 1–26 (MASLALRGSSENPAPTKDTTTNPRGI) is disordered. A compositionally biased stretch (polar residues) spans 9–23 (SSENPAPTKDTTTNP).

The protein belongs to the prefoldin subunit alpha family. Heterohexamer of two PFD-alpha type and four PFD-beta type subunits.

In terms of biological role, prefoldin subunit; part of the gene cluster that mediates the biosynthesis of elsinochromes, pigments consisting of at least four interconvertible tautomers (A, B, C and D) that have a core phenolic quinone to which various side chains are attached and which play an important role in fungal pathogenesis. The non-reducing polyketide synthase PKS1 was proposed to iteratively catalyze decarboxylation between acetyl-CoA and malonyl-CoA subunits for polyketide chain elongation. The released polyketide undergoes cyclization to form an aromatic ring, and proceeds via serial modification steps to produce the heptaketide back- bone of elsinochrome. As elsinochrome has a symmetrical structure, two identical heptaketides are fused to form a core 1,2-dihydrobenzo-perylene ring structure, which can then be successively modified to produce the various derivatives of elsinochrome. Some of these reactions may be cooperatively carried out, at least in part, by the products of RDT1, OXR1 and PKS1. PRF1, embedded within the elsinochrome cluster possibly functions to stabilize some of the biosynthetic enzymes required for elsinochrome production. As prefoldin is a hexamer containing 2 a and 4 b subunits, additional prefoldin subunits, whose coding genes may not immediately link to the elsinochrome biosynthetic gene cluster, are required to fulfill the chaperone function. In addition, no methyltransferase-coding gene exists within the biosynthetic gene cluster, even though elsinochrome has four methyl groups at positions C3, C7, C8 and C12. Apparently, the identified gene cluster does not contain the entire entourage of genes responsible for elsinochrome biosynthesis. Once elsinochrome is synthesized, it must be exported outside the fungal cells, which is probably accomplished by the ECT1 transporter, to avoid toxicity. The chain is Prefoldin subunit 3 from Elsinoe fawcettii (Citrus scab fungus).